Reading from the N-terminus, the 86-residue chain is DNA replication protein 1 (86 aa).

Residues 38 to 67 are a coiled coil; it reads LELEKKMTKLEHENKLMKNALYELSRMENN.

It belongs to the phi29likevirus DNA replication protein 1 family. In terms of assembly, homomultimer. Self-associates into large complexes forming long filamentous structures. Interacts (via N-terminus) with the primer terminal protein. Interacts with host FtsZ protein.

It localises to the host membrane. Functionally, protein that assembles into highly ordered structures and provides a specific site for viral DNA replication. Probably anchors the viral DNA replisome to the host membrane. This chain is DNA replication protein 1 (1), found in Bacillus subtilis (Bacteriophage phi-29).